Consider the following 156-residue polypeptide: 6,7-dimethyl-8-ribityllumazine synthase (156 aa).

5-amino-6-(D-ribitylamino)uracil is bound by residues Phe-25, 59-61 (AFE), and 83-85 (AVI). Residue 88-89 (AT) participates in (2S)-2-hydroxy-3-oxobutyl phosphate binding. Catalysis depends on His-91, which acts as the Proton donor. Phe-116 provides a ligand contact to 5-amino-6-(D-ribitylamino)uracil. Arg-130 is a binding site for (2S)-2-hydroxy-3-oxobutyl phosphate.

This sequence belongs to the DMRL synthase family.

It carries out the reaction (2S)-2-hydroxy-3-oxobutyl phosphate + 5-amino-6-(D-ribitylamino)uracil = 6,7-dimethyl-8-(1-D-ribityl)lumazine + phosphate + 2 H2O + H(+). It participates in cofactor biosynthesis; riboflavin biosynthesis; riboflavin from 2-hydroxy-3-oxobutyl phosphate and 5-amino-6-(D-ribitylamino)uracil: step 1/2. Functionally, catalyzes the formation of 6,7-dimethyl-8-ribityllumazine by condensation of 5-amino-6-(D-ribitylamino)uracil with 3,4-dihydroxy-2-butanone 4-phosphate. This is the penultimate step in the biosynthesis of riboflavin. The sequence is that of 6,7-dimethyl-8-ribityllumazine synthase from Nitratidesulfovibrio vulgaris (strain DSM 19637 / Miyazaki F) (Desulfovibrio vulgaris).